The primary structure comprises 146 residues: Ribosome maturation factor RimP (146 aa).

This sequence belongs to the RimP family.

It is found in the cytoplasm. Required for maturation of 30S ribosomal subunits. This chain is Ribosome maturation factor RimP, found in Helicobacter pylori (strain HPAG1).